A 103-amino-acid chain; its full sequence is Large ribosomal subunit protein bL21 (103 aa).

Belongs to the bacterial ribosomal protein bL21 family. In terms of assembly, part of the 50S ribosomal subunit. Contacts protein L20.

This protein binds to 23S rRNA in the presence of protein L20. This is Large ribosomal subunit protein bL21 from Aliivibrio fischeri (strain ATCC 700601 / ES114) (Vibrio fischeri).